Reading from the N-terminus, the 180-residue chain is GTP cyclohydrolase 1 (180 aa).

Zn(2+)-binding residues include Cys-71, His-74, and Cys-142.

It belongs to the GTP cyclohydrolase I family. As to quaternary structure, toroid-shaped homodecamer, composed of two pentamers of five dimers.

It catalyses the reaction GTP + H2O = 7,8-dihydroneopterin 3'-triphosphate + formate + H(+). Its pathway is cofactor biosynthesis; 7,8-dihydroneopterin triphosphate biosynthesis; 7,8-dihydroneopterin triphosphate from GTP: step 1/1. In Helicobacter pylori (strain J99 / ATCC 700824) (Campylobacter pylori J99), this protein is GTP cyclohydrolase 1 (folE).